Here is a 168-residue protein sequence, read N- to C-terminus: Small ribosomal subunit protein uS9 (168 aa).

Acidic residues predominate over residues 1–15 (MAQNEETTEAVEAEE). Positions 1 to 34 (MAQNEETTEAVEAEETLTSYTSESGAAEAAAPKK) are disordered.

The protein belongs to the universal ribosomal protein uS9 family.

The polypeptide is Small ribosomal subunit protein uS9 (Arthrobacter sp. (strain FB24)).